A 214-amino-acid chain; its full sequence is Neuromodulin (214 aa).

Positions 1 to 214 (MLCCMRRTKQ…EEAKPDQENA (214 aa)) are disordered. 2 S-palmitoyl cysteine lipidation sites follow: C3 and C4. Composition is skewed to basic and acidic residues over residues 9-33 (KQVE…DKAH), 52-88 (MKDD…KTEE), and 95-122 (LEVK…KDTP). The 30-residue stretch at 32–61 (AHKAATKIQASFRGHIIRKKMKDDKKDDNS) folds into the IQ domain. The segment covering 124 to 133 (EENQASAESE) has biased composition (low complexity). Basic and acidic residues-rich tracts occupy residues 150 to 160 (QAKEESKKADV), 168 to 193 (ASEK…EIKA), and 205 to 214 (EEAKPDQENA).

This sequence belongs to the neuromodulin family. Binds calmodulin with a greater affinity in the absence of Ca(2+) than in its presence. In terms of processing, palmitoylated. Palmitoylation is essential for plasma membrane association.

The protein localises to the cell membrane. The protein resides in the cell projection. It localises to the growth cone membrane. Its subcellular location is the synapse. It is found in the filopodium membrane. In terms of biological role, this protein is associated with nerve growth. It is a major component of the motile 'growth cones' that form the tips of elongating axons. Plays a role in axonal and dendritic filopodia induction. The sequence is that of Neuromodulin (gap43) from Xenopus laevis (African clawed frog).